Here is a 340-residue protein sequence, read N- to C-terminus: tRNA N6-adenosine threonylcarbamoyltransferase (340 aa).

2 residues coordinate Fe cation: histidine 111 and histidine 115. Residues 134-138 (IISGA), aspartate 167, glycine 180, and asparagine 273 contribute to the substrate site. Aspartate 301 contacts Fe cation.

It belongs to the KAE1 / TsaD family. Requires Fe(2+) as cofactor.

The protein localises to the cytoplasm. The enzyme catalyses L-threonylcarbamoyladenylate + adenosine(37) in tRNA = N(6)-L-threonylcarbamoyladenosine(37) in tRNA + AMP + H(+). Required for the formation of a threonylcarbamoyl group on adenosine at position 37 (t(6)A37) in tRNAs that read codons beginning with adenine. Is involved in the transfer of the threonylcarbamoyl moiety of threonylcarbamoyl-AMP (TC-AMP) to the N6 group of A37, together with TsaE and TsaB. TsaD likely plays a direct catalytic role in this reaction. In Wigglesworthia glossinidia brevipalpis, this protein is tRNA N6-adenosine threonylcarbamoyltransferase.